Here is a 414-residue protein sequence, read N- to C-terminus: 3-oxoacyl-[acyl-carrier-protein] synthase 2 (414 aa).

Residues 4 to 411 (NKRVVITGMG…GHNAVLVFKK (408 aa)) enclose the Ketosynthase family 3 (KS3) domain. Active-site for beta-ketoacyl synthase activity residues include Cys165, His304, and His341.

It belongs to the thiolase-like superfamily. Beta-ketoacyl-ACP synthases family.

The enzyme catalyses a fatty acyl-[ACP] + malonyl-[ACP] + H(+) = a 3-oxoacyl-[ACP] + holo-[ACP] + CO2. It catalyses the reaction (9Z)-hexadecenoyl-[ACP] + malonyl-[ACP] + H(+) = 3-oxo-(11Z)-octadecenoyl-[ACP] + holo-[ACP] + CO2. The protein operates within lipid metabolism; fatty acid biosynthesis. Its function is as follows. Involved in the type II fatty acid elongation cycle. Catalyzes the elongation of a wide range of acyl-ACP by the addition of two carbons from malonyl-ACP to an acyl acceptor. Can efficiently catalyze the conversion of palmitoleoyl-ACP (cis-hexadec-9-enoyl-ACP) to cis-vaccenoyl-ACP (cis-octadec-11-enoyl-ACP), an essential step in the thermal regulation of fatty acid composition. The chain is 3-oxoacyl-[acyl-carrier-protein] synthase 2 (fabF) from Staphylococcus aureus (strain Mu50 / ATCC 700699).